A 191-amino-acid polypeptide reads, in one-letter code: Prostaglandin-H2 D-isomerase (191 aa).

A signal peptide spans 1-24 (MATPNRPWMGLLLLGVLGVLQTPA). Residue Asn-51 is glycosylated (N-linked (GlcNAc...) asparagine). The Nucleophile role is filled by Cys-65. Residue Asn-78 is glycosylated (N-linked (GlcNAc...) asparagine). A disulfide bridge links Cys-89 with Cys-186.

Belongs to the calycin superfamily. Lipocalin family. As to quaternary structure, monomer. In the male reproductive system, it is expressed in the testis and epididymis, and is secreted into the seminal fluid.

The protein localises to the rough endoplasmic reticulum. Its subcellular location is the nucleus membrane. It localises to the golgi apparatus. The protein resides in the cytoplasm. It is found in the perinuclear region. The protein localises to the secreted. The enzyme catalyses prostaglandin H2 = prostaglandin D2. Functionally, catalyzes the conversion of PGH2 to PGD2, a prostaglandin involved in smooth muscle contraction/relaxation and a potent inhibitor of platelet aggregation. Involved in a variety of CNS functions, such as sedation, NREM sleep and PGE2-induced allodynia, and may have an anti-apoptotic role in oligodendrocytes. Binds small non-substrate lipophilic molecules, including biliverdin, bilirubin, retinal, retinoic acid and thyroid hormone, and may act as a scavenger for harmful hydrophobic molecules and as a secretory retinoid and thyroid hormone transporter. Possibly involved in development and maintenance of the blood-brain, blood-retina, blood-aqueous humor and blood-testis barrier. It is likely to play important roles in both maturation and maintenance of the central nervous system and male reproductive system. Involved in PLA2G3-dependent maturation of mast cells. PLA2G3 is secreted by immature mast cells and acts on nearby fibroblasts upstream to PTDGS to synthesize PGD2, which in turn promotes mast cell maturation and degranulation via PTGDR. The chain is Prostaglandin-H2 D-isomerase (PTGDS) from Ovis aries (Sheep).